Reading from the N-terminus, the 573-residue chain is DNA polymerase lambda (573 aa).

Residues 35–131 (EARGWLSSLR…RLTDTEGFSL (97 aa)) form the BRCT domain. Disordered regions lie at residues 126–204 (TEGF…GPQV) and 214–233 (TGHYPTPPEEDGGPDPAPEA). Residues 263-277 (KAYSVQGDKWRALGY) are DNA-binding. Residue K310 is the Schiff-base intermediate with DNA of the active site. The tract at residues 343 to 346 (GTKT) is DNA-binding. DCTP-binding positions include R384, 415–418 (SYRR), and 424–427 (GDVD). Positions 418-427 (RGKMTCGDVD) are involved in primer binding. Mn(2+)-binding residues include D425, D427, and D488. The tract at residues 464–503 (ENGQQQKYLGVCRLPGPGKRHRRLDIIVVPYCEFACALLY) is DNA-binding. DCTP is bound at residue N511.

It belongs to the DNA polymerase type-X family. In terms of assembly, interacts with PCNA. Interacts with PAXX; promoting POLL recruitment to double-strand breaks (DSBs) and stimulation of the end-filling activity of POLL. Interacts with XRCC4; promoting POLL recruitment to double-strand breaks (DSBs) and stimulation of the end-filling activity of POLL. Interacts with NHEJ1/XLF; promoting POLL recruitment to double-strand breaks (DSBs) and stimulation of the end-filling activity of POLL. Mn(2+) is required as a cofactor.

It is found in the nucleus. It carries out the reaction DNA(n) + a 2'-deoxyribonucleoside 5'-triphosphate = DNA(n+1) + diphosphate. Its function is as follows. DNA polymerase that functions in several pathways of DNA repair. Involved in base excision repair (BER) responsible for repair of lesions that give rise to abasic (AP) sites in DNA. Also contributes to DNA double-strand break repair by non-homologous end joining and homologous recombination. Has both template-dependent and template-independent (terminal transferase) DNA polymerase activities. Also has a 5'-deoxyribose-5-phosphate lyase (dRP lyase) activity. This chain is DNA polymerase lambda, found in Mus musculus (Mouse).